A 191-amino-acid polypeptide reads, in one-letter code: Inosine triphosphate pyrophosphatase (191 aa).

15–20 (TGNANK) is an ITP binding site. Glu-43 lines the Mg(2+) pocket. Residues Lys-55, 71–72 (DT), Lys-88, 147–150 (FGWD), Lys-168, and 173–174 (HR) contribute to the ITP site.

Belongs to the HAM1 NTPase family. In terms of assembly, homodimer. Mg(2+) serves as cofactor. Mn(2+) is required as a cofactor.

Its subcellular location is the cytoplasm. It is found in the nucleus. The enzyme catalyses ITP + H2O = IMP + diphosphate + H(+). It carries out the reaction dITP + H2O = dIMP + diphosphate + H(+). The catalysed reaction is XTP + H2O = XMP + diphosphate + H(+). Its function is as follows. Pyrophosphatase that hydrolyzes non-canonical purine nucleotides such as inosine triphosphate (ITP), deoxyinosine triphosphate (dITP) or xanthosine 5'-triphosphate (XTP) to their respective monophosphate derivatives. The enzyme does not distinguish between the deoxy- and ribose forms. Probably excludes non-canonical purines from RNA and DNA precursor pools, thus preventing their incorporation into RNA and DNA and avoiding chromosomal lesions. The sequence is that of Inosine triphosphate pyrophosphatase from Neurospora crassa (strain ATCC 24698 / 74-OR23-1A / CBS 708.71 / DSM 1257 / FGSC 987).